A 687-amino-acid polypeptide reads, in one-letter code: Chloride channel protein ClC-Kb (687 aa).

The Cytoplasmic portion of the chain corresponds to 1–50 (MEEFVGLREGSSGNPVTLQELWGPCPRIRRGIRGGLEWLKQKLFRLGEDW). Helical transmembrane passes span 51 to 82 (YFLM…QWLY) and 91 to 111 (LRYL…SGFS). The segment at residues 116-127 (PSSGGSGIPEVK) is an intramembrane region (helical). Ser121 is a chloride binding site. 2 helical membrane-spanning segments follow: residues 141–160 (IKNF…CGST) and 161–180 (LFLG…AAYL). Asn193 carries N-linked (GlcNAc...) asparagine glycosylation. An intramembrane region (helical) is located at residues 203–224 (AAAAVGVATVFAAPFSGVLFSI). The helical transmembrane segment at 236-255 (YWRGFFAATCGAFMFRLLAV) threads the bilayer. Ca(2+)-binding residues include Glu259, Glu261, Asp278, and Glu281. The next 2 membrane-spanning stretches (helical) occupy residues 282-310 (IFFF…FGFI) and 325-342 (PVYS…TYPP). The helical intramembrane region spans 349–360 (ASRLSMKQHLDS). Transmembrane regions (helical) follow at residues 400-420 (GTLA…TTIP) and 421-440 (MPAG…GRLF). Phe426 lines the chloride pocket. Positions 464–496 (GGYALAGAAAFSGAVTHTISTALLAFEVTGQIV) form an intramembrane region, helical. The chain crosses the membrane as a helical span at residues 500–520 (PVLMAVLAANAIAQSCQPSFY). At 521 to 687 (DGTVIVKKLP…SNLTNPPAPK (167 aa)) the chain is on the cytoplasmic side. 2 CBS domains span residues 551-609 (MNHS…EPPS) and 626-684 (CPTE…TNPP).

It belongs to the chloride channel (TC 2.A.49) family. CLCNKB subfamily. Homodimer. Interacts with BSND. Post-translationally, N-glycosylated.

The protein localises to the basolateral cell membrane. It catalyses the reaction chloride(in) = chloride(out). The enzyme catalyses iodide(out) = iodide(in). It carries out the reaction nitrate(in) = nitrate(out). The catalysed reaction is bromide(in) = bromide(out). With respect to regulation, activated by extracellular Ca(2+) and inhibited by extracellular acidic pH. In terms of biological role, anion-selective channel permeable to small monovalent anions with ion selectivity for chloride &gt; bromide &gt; nitrate &gt; iodide. Forms a homodimeric channel where each subunit has its own ion conduction pathway. May conduct double-barreled currents controlled by two types of gates, two fast gates that control each subunit independently and a slow common gate that opens and shuts off both subunits simultaneously. Assembles with the regulatory subunit BSND/Barttin for sorting at the basolateral plasma membrane domain and functional switch to the ion conducting state. CLCNKB:BSND channels display mostly a linear current-voltage relationship controlled by common gate. Mediates chloride conductance along nephron segments, namely the thick ascending limb of Henle's loop, convoluted tubule and the collecting duct, contributing to the maintenance of systemic acid-base and electrolyte homeostasis. Conducts chloride currents in the stria vascularis of the inner ear to establish the endocochlear potential necessary for normal hearing. The polypeptide is Chloride channel protein ClC-Kb (Homo sapiens (Human)).